Here is a 165-residue protein sequence, read N- to C-terminus: MPAWLTNRTIYFLCFLAIAGLMGFAFYLQYVKDLEPCPLCMAQRIAFVLAGLVFLAAALHNPKNTGTTVYAFLGWVTTLGGAALATRQLWLQSLPADQVPACGPGLEYMLEAFPFSEVLTMMLTGTGECAEVQWTFLGLSIPGWTLVAFIGFTAVWAFAWVRRPR.

The Cytoplasmic portion of the chain corresponds to 1–10; the sequence is MPAWLTNRTI. Residues 11–27 form a helical membrane-spanning segment; the sequence is YFLCFLAIAGLMGFAFY. Topologically, residues 28–45 are periplasmic; the sequence is LQYVKDLEPCPLCMAQRI. Cysteines 37 and 40 form a disulfide. The chain crosses the membrane as a helical span at residues 46–62; that stretch reads AFVLAGLVFLAAALHNP. Topologically, residues 63–68 are cytoplasmic; it reads KNTGTT. A helical membrane pass occupies residues 69-86; it reads VYAFLGWVTTLGGAALAT. Over 87–143 the chain is Periplasmic; that stretch reads RQLWLQSLPADQVPACGPGLEYMLEAFPFSEVLTMMLTGTGECAEVQWTFLGLSIPG. C102 and C129 are disulfide-bonded. The helical transmembrane segment at 144 to 162 threads the bilayer; the sequence is WTLVAFIGFTAVWAFAWVR. Topologically, residues 163 to 165 are cytoplasmic; that stretch reads RPR.

This sequence belongs to the DsbB family.

The protein resides in the cell inner membrane. Its function is as follows. Required for disulfide bond formation in some periplasmic proteins. Acts by oxidizing the DsbA protein. The sequence is that of Disulfide bond formation protein B from Hahella chejuensis (strain KCTC 2396).